The primary structure comprises 356 residues: Phosphoribosyl pyrophosphate synthase-associated protein 1 (356 aa).

The residue at position 1 (Met1) is an N-acetylmethionine. Residues Ser177 and Ser215 each carry the phosphoserine modification.

It belongs to the ribose-phosphate pyrophosphokinase family. As to quaternary structure, binds to PRPS1 and PRPS2. As to expression, ubiquitous.

In terms of biological role, seems to play a negative regulatory role in 5-phosphoribose 1-diphosphate synthesis. The polypeptide is Phosphoribosyl pyrophosphate synthase-associated protein 1 (Prpsap1) (Rattus norvegicus (Rat)).